We begin with the raw amino-acid sequence, 250 residues long: Developmental protein SEPALLATA 2 (250 aa).

The 55-residue stretch at Arg-3–Phe-57 folds into the MADS-box domain. Positions Ala-85 to Gln-150 form a coiled coil. Residues Leu-88–Val-178 enclose the K-box domain.

Heterodimer with AGAMOUS capable of binding to CArG-box sequences. Interacts with TT16/AGL32.

Its subcellular location is the nucleus. In terms of biological role, probable transcription factor. Functions with SEPALLATA1/AGL2 and SEPALLATA3/AGL9 to ensure proper development of petals, stamens and carpels and to prevent the indeterminate growth of the flower meristem. Forms a heterodimer via the K-box domain with AG, that could be involved in genes regulation during floral meristem development. This is Developmental protein SEPALLATA 2 (SEP2) from Arabidopsis thaliana (Mouse-ear cress).